The primary structure comprises 375 residues: Tubulinyl-Tyr carboxypeptidase 1 (375 aa).

A compositionally biased stretch (low complexity) spans 1–33; it reads MPGGKKVVPSGSSSASPNAAATTTAAAAAAAAA. The disordered stretch occupies residues 1 to 69; sequence MPGGKKVVPS…EEDLRDGGVP (69 aa). Positions 53–63 are enriched in acidic residues; that stretch reads EEPEEEGEEDL. Residues C179, H214, and S231 contribute to the active site. A disordered region spans residues 309-375; that stretch reads RDMRLKIGKG…PDLSGYQIRV (67 aa). Residues 329–375 are involved in heparin-binding and antiangiogenic activity; sequence KKDVSSPQRAQSSPHRRNSRSERRPSGEKKPAEPKAMPDLSGYQIRV. A compositionally biased stretch (basic and acidic residues) spans 347–361; it reads SRSERRPSGEKKPAE.

Belongs to the transglutaminase-like superfamily. Vasohibin family. In terms of assembly, interacts with SVBP; interaction enhances VASH1 tyrosine carboxypeptidase activity. Post-translationally, ubiquitinated in vitro. As to expression, expressed at low level in proliferating endothelial cells at the sprouting front but highly expressed in nonproliferating endothelial cells in the termination zone.

The protein resides in the cytoplasm. Its subcellular location is the secreted. The enzyme catalyses C-terminal L-alpha-aminoacyl-L-glutamyl-L-glutamyl-L-tyrosyl-[tubulin] + H2O = C-terminal L-alpha-aminoacyl-L-glutamyl-L-glutamyl-[tubulin] + L-tyrosine. Tyrosine carboxypeptidase that removes the C-terminal tyrosine residue of alpha-tubulin, thereby regulating microtubule dynamics and function. Acts as an angiogenesis inhibitor: inhibits migration, proliferation and network formation by endothelial cells as well as angiogenesis. This inhibitory effect is selective to endothelial cells as it does not affect the migration of smooth muscle cells or fibroblasts. In Mus musculus (Mouse), this protein is Tubulinyl-Tyr carboxypeptidase 1.